The chain runs to 1002 residues: Mitogen-activated protein kinase kinase kinase 21 (1002 aa).

Residues 1–26 (MALPVAEGTADTPLSPARDDSGSTSS) form a disordered region. Residues 24-88 (TSSGMWAALY…PASYVAPCGP (65 aa)) form the SH3 domain. One can recognise a Protein kinase domain in the interval 110 to 390 (LELKELIGAG…QLTAIEEAVL (281 aa)). ATP contacts are provided by residues 116-124 (IGAGGFGQV) and K137. D247 serves as the catalytic Proton acceptor. T283 is modified (phosphothreonine; by autocatalysis). A Phosphoserine; by autocatalysis and MAP4K1 modification is found at S287. 2 leucine-zipper regions span residues 409–430 (IQQM…EEEL) and 444–466 (LRRR…LNVL). Disordered stretches follow at residues 508–531 (TVQA…PPGS), 574–604 (GCTW…NSPW), 640–689 (HRKP…VGAP), 721–778 (AQAP…SHSS), 797–823 (LGNA…SGCE), and 878–899 (QSAP…RDLA). S512, S527, and S531 each carry phosphoserine. At T576 the chain carries Phosphothreonine. Positions 584 to 596 (TKERPEGRERVRP) are enriched in basic and acidic residues. Position 598 is a phosphoserine (S598). Basic and acidic residues predominate over residues 661 to 677 (DSQREDSSEAESREEGS). 2 stretches are compositionally biased toward low complexity: residues 740–758 (QPAS…QPSA) and 766–778 (STLL…SHSS).

It belongs to the protein kinase superfamily. STE Ser/Thr protein kinase family. MAP kinase kinase kinase subfamily. In terms of assembly, homodimer. Interacts with TLR4. Requires Mg(2+) as cofactor. Post-translationally, autophosphorylation on serine and threonine residues within the activation loop plays a role in enzyme activation.

It catalyses the reaction L-seryl-[protein] + ATP = O-phospho-L-seryl-[protein] + ADP + H(+). The enzyme catalyses L-threonyl-[protein] + ATP = O-phospho-L-threonyl-[protein] + ADP + H(+). Homodimerization via the leucine zipper domains is required for autophosphorylation and subsequent activation. Functionally, negative regulator of TLR4 signaling. Does not activate JNK1/MAPK8 pathway, p38/MAPK14, nor ERK2/MAPK1 pathways. The polypeptide is Mitogen-activated protein kinase kinase kinase 21 (Map3k21) (Mus musculus (Mouse)).